Reading from the N-terminus, the 175-residue chain is Ribosome maturation factor RimM (175 aa).

Positions 96-175 (EGDYYWHDLI…TIEVDWDAGF (80 aa)) constitute a PRC barrel domain.

This sequence belongs to the RimM family. Binds ribosomal protein uS19.

Its subcellular location is the cytoplasm. Its function is as follows. An accessory protein needed during the final step in the assembly of 30S ribosomal subunit, possibly for assembly of the head region. Essential for efficient processing of 16S rRNA. May be needed both before and after RbfA during the maturation of 16S rRNA. It has affinity for free ribosomal 30S subunits but not for 70S ribosomes. In Haemophilus influenzae (strain PittEE), this protein is Ribosome maturation factor RimM.